Here is a 200-residue protein sequence, read N- to C-terminus: Large ribosomal subunit protein uL4 (200 aa).

Positions 43-71 (RAQKTRAEVSGSGKKPWRQKGTGRARSGD) are disordered.

The protein belongs to the universal ribosomal protein uL4 family. In terms of assembly, part of the 50S ribosomal subunit.

Its function is as follows. One of the primary rRNA binding proteins, this protein initially binds near the 5'-end of the 23S rRNA. It is important during the early stages of 50S assembly. It makes multiple contacts with different domains of the 23S rRNA in the assembled 50S subunit and ribosome. Functionally, forms part of the polypeptide exit tunnel. In Histophilus somni (strain 129Pt) (Haemophilus somnus), this protein is Large ribosomal subunit protein uL4.